We begin with the raw amino-acid sequence, 323 residues long: Germination protease (323 aa).

The propeptide occupies 1 to 6 (MSVRTD).

Belongs to the peptidase A25 family. As to quaternary structure, homotetramer. In terms of processing, autoproteolytically processed. The inactive tetrameric zymogen termed p46 autoprocesses to a smaller form termed p41, which is active only during spore germination.

The enzyme catalyses Endopeptidase action with P4 Glu or Asp, P1 preferably Glu &gt; Asp, P1' hydrophobic and P2' Ala.. Its function is as follows. Initiates the rapid degradation of small, acid-soluble proteins during spore germination. The sequence is that of Germination protease from Clostridium tetani (strain Massachusetts / E88).